The following is a 179-amino-acid chain: Arginine repressor (179 aa).

Belongs to the ArgR family.

The protein localises to the cytoplasm. It participates in amino-acid biosynthesis; L-arginine biosynthesis [regulation]. Regulates arginine biosynthesis genes. This is Arginine repressor from Renibacterium salmoninarum (strain ATCC 33209 / DSM 20767 / JCM 11484 / NBRC 15589 / NCIMB 2235).